Reading from the N-terminus, the 315-residue chain is Phosphate transport system permease protein PstC (315 aa).

Topologically, residues 1–22 (MLTKSRKYFNQTWIESLFKQTT) are cytoplasmic. Residues 23–43 (ALFALLVFILLAAILISLVIG) form a helical membrane-spanning segment. At 44-77 (SWESIKRFGGSFLLETYWDPVQEQYGAIIPILGT) the chain is on the periplasmic side. Residues 74-302 (ILGTLITAGI…VITTMVLILS (229 aa)) form the ABC transmembrane type-1 domain. The chain crosses the membrane as a helical span at residues 78–98 (LITAGIALFIAVPISFGIAIF). Residues 99 to 117 (LTELAPNWLKRPISIAIEM) lie on the Cytoplasmic side of the membrane. Residues 118–138 (LAAIPSIIYGMWGLFVFVPLF) traverse the membrane as a helical segment. Residues 139-164 (QEHIQPVLIDNLGNLPGLELFFSGVP) lie on the Periplasmic side of the membrane. Residues 165–185 (FGVGLFTAGLVLAIMIIPFIA) traverse the membrane as a helical segment. Residues 186 to 223 (SVMRDVFSIVPPMLKEGAYGLGATTWEVVRQVIVPHTR) are Cytoplasmic-facing. A helical membrane pass occupies residues 224 to 244 (IGLVGSVMLGLGRALGETMAI). Residues 245–281 (TFIIGNSFQLPNSLFSPSTSIASAIANEFNEAGGLQK) are Periplasmic-facing. The helical transmembrane segment at 282–302 (SALMELGLLLFVITTMVLILS) threads the bilayer. Topologically, residues 303–315 (RLMITKMQQTKGK) are cytoplasmic.

Belongs to the binding-protein-dependent transport system permease family. CysTW subfamily.

The protein localises to the cell inner membrane. Its function is as follows. Part of the binding-protein-dependent transport system for phosphate; probably responsible for the translocation of the substrate across the membrane. This is Phosphate transport system permease protein PstC (pstC) from Haemophilus influenzae (strain ATCC 51907 / DSM 11121 / KW20 / Rd).